We begin with the raw amino-acid sequence, 241 residues long: Probable transcriptional regulatory protein NE0210 (241 aa).

It belongs to the TACO1 family.

It is found in the cytoplasm. The chain is Probable transcriptional regulatory protein NE0210 from Nitrosomonas europaea (strain ATCC 19718 / CIP 103999 / KCTC 2705 / NBRC 14298).